Reading from the N-terminus, the 187-residue chain is uncharacterized protein (187 aa).

This sequence belongs to the isochorismatase family.

This is an uncharacterized protein from Bacillus subtilis (strain 168).